The chain runs to 303 residues: tRNA pseudouridine synthase B (303 aa).

Asp-38 serves as the catalytic Nucleophile.

The protein belongs to the pseudouridine synthase TruB family. Type 1 subfamily.

It catalyses the reaction uridine(55) in tRNA = pseudouridine(55) in tRNA. Functionally, responsible for synthesis of pseudouridine from uracil-55 in the psi GC loop of transfer RNAs. This Oceanobacillus iheyensis (strain DSM 14371 / CIP 107618 / JCM 11309 / KCTC 3954 / HTE831) protein is tRNA pseudouridine synthase B.